A 1075-amino-acid polypeptide reads, in one-letter code: Carbamoyl phosphate synthase large chain (1075 aa).

A carboxyphosphate synthetic domain region spans residues 1-403 (MPKRTDINTI…SLQKALRGLE (403 aa)). Positions 129, 169, 175, 176, 208, 210, 215, 241, 242, 243, 285, and 299 each coordinate ATP. The ATP-grasp 1 domain occupies 133 to 328 (KDAMTKIGLN…IAKVAAKLAV (196 aa)). Mg(2+) is bound by residues glutamine 285, glutamate 299, and asparagine 301. Mn(2+) is bound by residues glutamine 285, glutamate 299, and asparagine 301. The tract at residues 404–548 (IGICGFNLRS…YSTYEDECEA (145 aa)) is oligomerization domain. A carbamoyl phosphate synthetic domain region spans residues 549-930 (KPTTRQKVMI…AYYKAQLGAG (382 aa)). The 192-residue stretch at 673–864 (QKILTDLGLK…LAKIAALVMA (192 aa)) folds into the ATP-grasp 2 domain. ATP is bound by residues arginine 709, histidine 748, leucine 750, glutamate 755, glycine 780, isoleucine 781, histidine 782, serine 783, glutamine 823, and glutamate 835. Mg(2+) contacts are provided by glutamine 823, glutamate 835, and asparagine 837. Glutamine 823, glutamate 835, and asparagine 837 together coordinate Mn(2+). Positions 931-1070 (ERIPSTGKVF…QQLHLSSALA (140 aa)) constitute an MGS-like domain. An allosteric domain region spans residues 931-1075 (ERIPSTGKVF…SSALANQITR (145 aa)).

Belongs to the CarB family. In terms of assembly, composed of two chains; the small (or glutamine) chain promotes the hydrolysis of glutamine to ammonia, which is used by the large (or ammonia) chain to synthesize carbamoyl phosphate. Tetramer of heterodimers (alpha,beta)4. The cofactor is Mg(2+). It depends on Mn(2+) as a cofactor.

The catalysed reaction is hydrogencarbonate + L-glutamine + 2 ATP + H2O = carbamoyl phosphate + L-glutamate + 2 ADP + phosphate + 2 H(+). It carries out the reaction hydrogencarbonate + NH4(+) + 2 ATP = carbamoyl phosphate + 2 ADP + phosphate + 2 H(+). The protein operates within amino-acid biosynthesis; L-arginine biosynthesis; carbamoyl phosphate from bicarbonate: step 1/1. It participates in pyrimidine metabolism; UMP biosynthesis via de novo pathway; (S)-dihydroorotate from bicarbonate: step 1/3. Functionally, large subunit of the glutamine-dependent carbamoyl phosphate synthetase (CPSase). CPSase catalyzes the formation of carbamoyl phosphate from the ammonia moiety of glutamine, carbonate, and phosphate donated by ATP, constituting the first step of 2 biosynthetic pathways, one leading to arginine and/or urea and the other to pyrimidine nucleotides. The large subunit (synthetase) binds the substrates ammonia (free or transferred from glutamine from the small subunit), hydrogencarbonate and ATP and carries out an ATP-coupled ligase reaction, activating hydrogencarbonate by forming carboxy phosphate which reacts with ammonia to form carbamoyl phosphate. The chain is Carbamoyl phosphate synthase large chain from Haemophilus ducreyi (strain 35000HP / ATCC 700724).